The following is a 258-amino-acid chain: Proteasome subunit alpha (258 aa).

Belongs to the peptidase T1A family. The 20S proteasome core is composed of 14 alpha and 14 beta subunits that assemble into four stacked heptameric rings, resulting in a barrel-shaped structure. The two inner rings, each composed of seven catalytic beta subunits, are sandwiched by two outer rings, each composed of seven alpha subunits. The catalytic chamber with the active sites is on the inside of the barrel. Has a gated structure, the ends of the cylinder being occluded by the N-termini of the alpha-subunits. Is capped by the proteasome-associated ATPase, ARC.

It is found in the cytoplasm. The protein operates within protein degradation; proteasomal Pup-dependent pathway. Its activity is regulated as follows. The formation of the proteasomal ATPase ARC-20S proteasome complex, likely via the docking of the C-termini of ARC into the intersubunit pockets in the alpha-rings, may trigger opening of the gate for substrate entry. Interconversion between the open-gate and close-gate conformations leads to a dynamic regulation of the 20S proteasome proteolysis activity. In terms of biological role, component of the proteasome core, a large protease complex with broad specificity involved in protein degradation. The protein is Proteasome subunit alpha of Nocardia farcinica (strain IFM 10152).